Reading from the N-terminus, the 686-residue chain is Chondroitin synthase (686 aa).

Positions 130 to 417 are galactosaminyltransferase; A1 domain; the sequence is YVWAGKRKEL…LLQQKVPYFY (288 aa). UDP-N-acetyl-alpha-D-galactosamine is bound by residues proline 157, arginine 161, aspartate 188, tyrosine 217, arginine 223, and 239 to 240; that span reads DC. Aspartate 241 serves as a coordination point for Mn(2+). 361–362 lines the UDP-N-acetyl-alpha-D-galactosamine pocket; sequence ED. Histidine 386 contacts Mn(2+). The interval 418–682 is glucuronosyltransferase; A2 domain; sequence RKKEKIESAT…ECRKYTWEKI (265 aa). Residues tyrosine 441, aspartate 469, and 517–520 contribute to the UDP-alpha-D-glucuronate site; that span reads QLDS. Mn(2+) is bound at residue aspartate 521. Residues histidine 581 and 603 to 604 contribute to the UDP-alpha-D-glucuronate site; that span reads AV. Residue histidine 631 coordinates Mn(2+).

The protein belongs to the glycosyltransferase 2 family. CS/HAS subfamily. Mn(2+) serves as cofactor.

It carries out the reaction 3-O-(beta-D-GlcA-(1-&gt;3)-beta-D-GalNAc-(1-&gt;4)-beta-D-GlcA-(1-&gt;3)-beta-D-Gal-(1-&gt;3)-beta-D-Gal-(1-&gt;4)-beta-D-Xyl)-L-seryl-[protein] + UDP-N-acetyl-alpha-D-galactosamine = 3-O-(beta-D-GalNAc-(1-&gt;4)-beta-D-GlcA-(1-&gt;3)-beta-D-GalNAc-(1-&gt;4)-beta-D-GlcA-(1-&gt;3)-beta-D-Gal-(1-&gt;3)-beta-D-Gal-(1-&gt;4)-beta-D-Xyl)-L-seryl-[protein] + UDP + H(+). The enzyme catalyses 3-O-{beta-D-GlcA-(1-&gt;3)-[beta-D-GalNAc-(1-&gt;4)-beta-D-GlcA-(1-&gt;3)](n)-beta-D-GalNAc-(1-&gt;4)-beta-D-GlcA-(1-&gt;3)-beta-D-Gal-(1-&gt;3)-beta-D-Gal-(1-&gt;4)-beta-D-Xyl}-L-seryl-[protein] + UDP-N-acetyl-alpha-D-galactosamine = 3-O-{[beta-D-GalNAc-(1-&gt;4)-beta-D-GlcA-(1-&gt;3)](n+1)-beta-D-GalNAc-(1-&gt;4)-beta-D-GlcA-(1-&gt;3)-beta-D-Gal-(1-&gt;3)-beta-D-Gal-(1-&gt;4)-beta-D-Xyl}-L-seryl-[protein] + UDP + H(+). The catalysed reaction is 3-O-(beta-D-GalNAc-(1-&gt;4)-beta-D-GlcA-(1-&gt;3)-beta-D-Gal-(1-&gt;3)-beta-D-Gal-(1-&gt;4)-beta-D-Xyl)-L-seryl-[protein] + UDP-alpha-D-glucuronate = 3-O-(beta-D-GlcA-(1-&gt;3)-beta-D-GalNAc-(1-&gt;4)-beta-D-GlcA-(1-&gt;3)-beta-D-Gal-(1-&gt;3)-beta-D-Gal-(1-&gt;4)-beta-D-Xyl)-L-seryl-[protein] + UDP + H(+). It catalyses the reaction 3-O-{[beta-D-GalNAc-(1-&gt;4)-beta-D-GlcA-(1-&gt;3)](n)-beta-D-GalNAc-(1-&gt;4)-beta-D-GlcA-(1-&gt;3)-beta-D-Gal-(1-&gt;3)-beta-D-Gal-(1-&gt;4)-beta-D-Xyl}-L-seryl-[protein] + UDP-alpha-D-glucuronate = 3-O-{beta-D-GlcA-(1-&gt;3)-[beta-D-GalNAc-(1-&gt;4)-beta-D-GlcA-(1-&gt;3)](n)-beta-D-GalNAc-(1-&gt;4)-beta-D-GlcA-(1-&gt;3)-beta-D-Gal-(1-&gt;3)-beta-D-Gal-(1-&gt;4)-beta-D-Xyl}-L-seryl-[protein] + UDP + H(+). In terms of biological role, glycosyltransferase that catalyzes elongation of chondroitin, a polysaccharide composed of a repeating disaccharide of N-acetylgalactosamine (GalNAc) and glucuronic acid (GlcUA) units, by alternatively transferring the GlcUA and GalNAc moiety from UDP-GlcUA and UDP-GalNAc to the non-reducing ends of the chondroitin chain. Each chondroitin unit has the composition beta-(1-&gt;4)-GlcUA-beta-(1-&gt;3)-GalNAc. In Escherichia coli, this protein is Chondroitin synthase (kfoC).